The following is a 254-amino-acid chain: MTEIRYVRLLTLVLASSVLLAGCSSAVPTTPVRSATPSAAATPTATPVVPPTVNPAATASLHAAARSGDAEAVRSALAAGAAIEDRGEGGRTPLVEAAKGNHVEAARALIEAGADVNAKDDIQDSAYLYAGAEGYLEILRMTLTTGADVNAKNRFNGTALIPASEHAHTEVVRMLIAAGVDLDHVNTPGWTAMQEAIVLGNGGAGAQDVVRQLLAAGANPDIRDSRGRTSLCNATRLGFGAIASQLRAAGATGC.

An N-terminal signal peptide occupies residues 1–22 (MTEIRYVRLLTLVLASSVLLAG). C23 carries N-palmitoyl cysteine lipidation. C23 carries S-diacylglycerol cysteine lipidation. ANK repeat units lie at residues 56–85 (AATA…AIED), 89–118 (GGRT…DVNA), 122–151 (IQDS…DVNA), 155–184 (FNGT…DLDH), and 188–222 (PGWT…NPDI).

The protein resides in the cell membrane. The polypeptide is Putative ankyrin-containing lipoprotein Lxx09580 (Leifsonia xyli subsp. xyli (strain CTCB07)).